We begin with the raw amino-acid sequence, 30 residues long: Cyclotide hyen-E (30 aa).

The cyclopeptide (Gly-Asn) cross-link spans 1–30; sequence GVPCGESCVYIPCFTGIINCSCRDKVCYNN. Intrachain disulfides connect Cys-4–Cys-20, Cys-8–Cys-22, and Cys-13–Cys-27.

This is a cyclic peptide. Detected in stems (at protein level).

Functionally, probably participates in a plant defense mechanism. Has cytotoxic activity against HUVEC cells (LC(50)= 2.17 uM) and various cancer cells including HeLa (LC(50)= 3.05 uM), MCF-7 and K562. Displays very weak hemolytic activity. Binds to and induces leakage in phospholipd membranes, particularly ones containing 1-palmitoyl-2-oleophosphatidylethanolamine (POPE). The sequence is that of Cyclotide hyen-E from Pigea enneasperma (Spade flower).